A 405-amino-acid polypeptide reads, in one-letter code: Exodeoxyribonuclease 7 large subunit (405 aa).

Belongs to the XseA family. Heterooligomer composed of large and small subunits.

The protein resides in the cytoplasm. It carries out the reaction Exonucleolytic cleavage in either 5'- to 3'- or 3'- to 5'-direction to yield nucleoside 5'-phosphates.. In terms of biological role, bidirectionally degrades single-stranded DNA into large acid-insoluble oligonucleotides, which are then degraded further into small acid-soluble oligonucleotides. The chain is Exodeoxyribonuclease 7 large subunit from Halothermothrix orenii (strain H 168 / OCM 544 / DSM 9562).